The chain runs to 182 residues: Unknown protein 1 (182 aa).

The polypeptide is Unknown protein 1 (Helianthus annuus (Common sunflower)).